Consider the following 314-residue polypeptide: Methionyl-tRNA formyltransferase (314 aa).

Ser113 to Pro116 provides a ligand contact to (6S)-5,6,7,8-tetrahydrofolate.

It belongs to the Fmt family.

The catalysed reaction is L-methionyl-tRNA(fMet) + (6R)-10-formyltetrahydrofolate = N-formyl-L-methionyl-tRNA(fMet) + (6S)-5,6,7,8-tetrahydrofolate + H(+). Functionally, attaches a formyl group to the free amino group of methionyl-tRNA(fMet). The formyl group appears to play a dual role in the initiator identity of N-formylmethionyl-tRNA by promoting its recognition by IF2 and preventing the misappropriation of this tRNA by the elongation apparatus. This chain is Methionyl-tRNA formyltransferase, found in Pseudomonas syringae pv. tomato (strain ATCC BAA-871 / DC3000).